The following is a 111-amino-acid chain: Probable 4-amino-4-deoxy-L-arabinose-phosphoundecaprenol flippase subunit ArnE (111 aa).

Transmembrane regions (helical) follow at residues 38-58 (LWLG…LLVL), 61-81 (LPVG…TLAA), and 91-111 (PRHW…GSAA). The 70-residue stretch at 40–109 (LGLALICMGA…IISGIIILGS (70 aa)) folds into the EamA domain.

This sequence belongs to the ArnE family. As to quaternary structure, heterodimer of ArnE and ArnF.

The protein resides in the cell inner membrane. The protein operates within bacterial outer membrane biogenesis; lipopolysaccharide biosynthesis. In terms of biological role, translocates 4-amino-4-deoxy-L-arabinose-phosphoundecaprenol (alpha-L-Ara4N-phosphoundecaprenol) from the cytoplasmic to the periplasmic side of the inner membrane. In Salmonella paratyphi B (strain ATCC BAA-1250 / SPB7), this protein is Probable 4-amino-4-deoxy-L-arabinose-phosphoundecaprenol flippase subunit ArnE.